The following is a 427-amino-acid chain: Enolase (427 aa).

Gln163 is a (2R)-2-phosphoglycerate binding site. The active-site Proton donor is the Glu205. Residues Asp242, Glu285, and Asp312 each coordinate Mg(2+). 4 residues coordinate (2R)-2-phosphoglycerate: Lys337, Arg366, Ser367, and Lys388. The Proton acceptor role is filled by Lys337.

The protein belongs to the enolase family. The cofactor is Mg(2+).

It is found in the cytoplasm. It localises to the secreted. Its subcellular location is the cell surface. The catalysed reaction is (2R)-2-phosphoglycerate = phosphoenolpyruvate + H2O. It participates in carbohydrate degradation; glycolysis; pyruvate from D-glyceraldehyde 3-phosphate: step 4/5. Functionally, catalyzes the reversible conversion of 2-phosphoglycerate (2-PG) into phosphoenolpyruvate (PEP). It is essential for the degradation of carbohydrates via glycolysis. This chain is Enolase, found in Burkholderia multivorans (strain ATCC 17616 / 249).